A 116-amino-acid chain; its full sequence is Small ribosomal subunit protein uS10m (116 aa).

Belongs to the universal ribosomal protein uS10 family.

Its subcellular location is the mitochondrion. The polypeptide is Small ribosomal subunit protein uS10m (RPS10) (Reclinomonas americana).